An 89-amino-acid chain; its full sequence is Defensin-like protein 108 (89 aa).

The N-terminal stretch at 1 to 20 is a signal peptide; the sequence is MTSLIAFLFTVLVIVSSVHC. Intrachain disulfides connect C39/C81, C49/C71, C57/C79, and C61/C80.

The protein belongs to the DEFL family.

It localises to the secreted. The polypeptide is Defensin-like protein 108 (LCR51) (Arabidopsis thaliana (Mouse-ear cress)).